A 288-amino-acid polypeptide reads, in one-letter code: Allergen Asp f 7 homolog (288 aa).

Residues 1–20 (MAPQFLKALTVATALGATLA) form the signal peptide. 2 stretches are compositionally biased toward low complexity: residues 48-107 (TVHG…SSSV) and 117-129 (TTSTPAPEPTTST). The segment at 48 to 161 (TVHGTPGPDY…PPVVSIPPIG (114 aa)) is disordered. Positions 130 to 151 (TPPPPPPAMTTPPPPPPPPATK) are enriched in pro residues. N-linked (GlcNAc...) asparagine glycosylation occurs at N268.

It localises to the secreted. The sequence is that of Allergen Asp f 7 homolog from Arthroderma benhamiae (strain ATCC MYA-4681 / CBS 112371) (Trichophyton mentagrophytes).